The sequence spans 519 residues: Circadian clock oscillator protein KaiC 1 (519 aa).

KaiC domains lie at 1 to 248 (MNLP…INIF) and 262 to 519 (ARIS…KTAE). Residues glycine 50, threonine 51, glycine 52, lysine 53, threonine 54, leucine 55, serine 90, lysine 225, leucine 226, arginine 227, threonine 229, histidine 231, threonine 241, threonine 291, glycine 292, threonine 293, glycine 294, lysine 295, threonine 296, and leucine 297 each coordinate ATP. Residue threonine 54 participates in Mg(2+) binding. Threonine 296 is a Mg(2+) binding site. A Mg(2+)-binding site is contributed by glutamate 319. Tryptophan 332 contributes to the ATP binding site. Phosphoserine; by autocatalysis is present on serine 432. At threonine 433 the chain carries Phosphothreonine; by autocatalysis. ATP-binding residues include arginine 452, lysine 458, methionine 459, arginine 460, serine 462, histidine 464, and lysine 466.

The protein belongs to the KaiC family. As to quaternary structure, homohexamer; hexamerization is dependent on ATP-binding. Core component of the KaiABC complex, at least composed of a KaiC homohexamer, a KaiB dimer and two KaiA dimers. Interacts directly with SasA. Multimerizes, probably forming homohexamers, no interaction with KaiC2 or KaiC3 is seen. Interacts with KaiA. In another study interacts with itself, KaiB1, KaiB3 and KaiC3. Interacts with SasA (hik8). Mg(2+) serves as cofactor. Phosphorylated on serine and threonine residues by autocatalysis. Has a 4 step phosphorylation cycle; the autokinase acts first on Thr-433, then Ser-432. When Ser-432 is modified KaiC switches to an autophosphatase mode, acting first on phospho-Thr-433 then phospho-Ser-432.

The catalysed reaction is L-seryl-[protein] + ATP = O-phospho-L-seryl-[protein] + ADP + H(+). It catalyses the reaction L-threonyl-[protein] + ATP = O-phospho-L-threonyl-[protein] + ADP + H(+). The enzyme catalyses ATP + H2O = ADP + phosphate + H(+). The interaction with KaiA enhances its phosphorylation status, while the interaction with KaiB decreases it. Its function is as follows. Component of the oscillator and circadian clock in this organism, enhances fitness in a rhythmic environment. Autophosphorylates in the presence of KaiA, no activity is seen in its absence. Functionally, central component of the KaiABC oscillator complex, which constitutes the main circadian regulator in cyanobacteria. Complex composition changes during the circadian cycle to control KaiC phosphorylation. KaiA stimulates KaiC autophosphorylation, while KaiB sequesters KaiA, leading to KaiC autodephosphorylation. Clock output pathways impact the RpaA transcriptional regulator. KaiC enhances the autophosphorylation activity of SasA, which then transfers its phosphate group to RpaA to activate it. KaiB and KaiC together enhance the phospho-RpaA dephosphatase activity of CikA. In terms of biological role, has a weak, temperature-independent ATPase activity; ATPase activity defines the circadian period. The phosphorylation state of KaiC modulates its ATPase activity and effects KaiB binding. In Synechocystis sp. (strain ATCC 27184 / PCC 6803 / Kazusa), this protein is Circadian clock oscillator protein KaiC 1.